A 343-amino-acid polypeptide reads, in one-letter code: ATP-dependent (S)-NAD(P)H-hydrate dehydratase (343 aa).

Residues 1–42 (MAVHACGAAAAVVALLSAAIALQWSPLYAVLQRALSLHTAHA) constitute a mitochondrion transit peptide. In terms of domain architecture, YjeF C-terminal spans 49–340 (LFQLVRNIVP…TEVGTAFSRL (292 aa)). N6-acetyllysine is present on Lys-63. At Tyr-81 the chain carries Phosphotyrosine. Residues Gly-149 and 202 to 208 (NHVEFSR) contribute to the (6S)-NADPHX site. Ser-216 bears the Phosphoserine mark. ATP is bound by residues 242–246 (KGEQD) and 261–270 (GSSRRCGGQG). Asp-271 provides a ligand contact to (6S)-NADPHX.

Belongs to the NnrD/CARKD family. Requires Mg(2+) as cofactor.

The protein resides in the mitochondrion. The catalysed reaction is (6S)-NADHX + ATP = ADP + phosphate + NADH + H(+). The enzyme catalyses (6S)-NADPHX + ATP = ADP + phosphate + NADPH + H(+). Functionally, catalyzes the dehydration of the S-form of NAD(P)HX at the expense of ATP, which is converted to ADP. Together with NAD(P)HX epimerase, which catalyzes the epimerization of the S- and R-forms, the enzyme allows the repair of both epimers of NAD(P)HX, a damaged form of NAD(P)H that is a result of enzymatic or heat-dependent hydration. This chain is ATP-dependent (S)-NAD(P)H-hydrate dehydratase, found in Mus musculus (Mouse).